The following is a 155-amino-acid chain: SsrA-binding protein (155 aa).

Belongs to the SmpB family.

The protein resides in the cytoplasm. Its function is as follows. Required for rescue of stalled ribosomes mediated by trans-translation. Binds to transfer-messenger RNA (tmRNA), required for stable association of tmRNA with ribosomes. tmRNA and SmpB together mimic tRNA shape, replacing the anticodon stem-loop with SmpB. tmRNA is encoded by the ssrA gene; the 2 termini fold to resemble tRNA(Ala) and it encodes a 'tag peptide', a short internal open reading frame. During trans-translation Ala-aminoacylated tmRNA acts like a tRNA, entering the A-site of stalled ribosomes, displacing the stalled mRNA. The ribosome then switches to translate the ORF on the tmRNA; the nascent peptide is terminated with the 'tag peptide' encoded by the tmRNA and targeted for degradation. The ribosome is freed to recommence translation, which seems to be the essential function of trans-translation. This Ligilactobacillus salivarius (strain UCC118) (Lactobacillus salivarius) protein is SsrA-binding protein.